Reading from the N-terminus, the 565-residue chain is CTP synthase (565 aa).

The interval 1–272 (MARPKNVKHI…DLRVLKKLGL (272 aa)) is amidoligase domain. Residue Ser-18 coordinates CTP. Ser-18 is a binding site for UTP. 19–24 (SLGKGI) serves as a coordination point for ATP. L-glutamine is bound at residue Tyr-59. Asp-76 provides a ligand contact to ATP. Mg(2+)-binding residues include Asp-76 and Glu-146. Residues 153 to 155 (DIE), 193 to 198 (KTKPTQ), and Lys-229 contribute to the CTP site. UTP contacts are provided by residues 193–198 (KTKPTQ) and Lys-229. In terms of domain architecture, Glutamine amidotransferase type-1 spans 299 to 543 (TIGICGKYTE…VAAAKEYAHG (245 aa)). Gly-363 provides a ligand contact to L-glutamine. Cys-390 functions as the Nucleophile; for glutamine hydrolysis in the catalytic mechanism. L-glutamine-binding positions include 391-394 (LGMQ), Glu-414, and Arg-471. Catalysis depends on residues His-516 and Glu-518.

This sequence belongs to the CTP synthase family. In terms of assembly, homotetramer.

It catalyses the reaction UTP + L-glutamine + ATP + H2O = CTP + L-glutamate + ADP + phosphate + 2 H(+). The enzyme catalyses L-glutamine + H2O = L-glutamate + NH4(+). It carries out the reaction UTP + NH4(+) + ATP = CTP + ADP + phosphate + 2 H(+). The protein operates within pyrimidine metabolism; CTP biosynthesis via de novo pathway; CTP from UDP: step 2/2. Its activity is regulated as follows. Allosterically activated by GTP, when glutamine is the substrate; GTP has no effect on the reaction when ammonia is the substrate. The allosteric effector GTP functions by stabilizing the protein conformation that binds the tetrahedral intermediate(s) formed during glutamine hydrolysis. Inhibited by the product CTP, via allosteric rather than competitive inhibition. Functionally, catalyzes the ATP-dependent amination of UTP to CTP with either L-glutamine or ammonia as the source of nitrogen. Regulates intracellular CTP levels through interactions with the four ribonucleotide triphosphates. The polypeptide is CTP synthase (Pelodictyon phaeoclathratiforme (strain DSM 5477 / BU-1)).